Reading from the N-terminus, the 403-residue chain is Tyrosine--tRNA ligase (403 aa).

The 'HIGH' region motif lies at Pro42–His51. The short motif at Lys226–Ser230 is the 'KMSKS' region element. An ATP-binding site is contributed by Lys229. The S4 RNA-binding domain maps to Met336–Leu396.

The protein belongs to the class-I aminoacyl-tRNA synthetase family. TyrS type 2 subfamily. In terms of assembly, homodimer.

It is found in the cytoplasm. The enzyme catalyses tRNA(Tyr) + L-tyrosine + ATP = L-tyrosyl-tRNA(Tyr) + AMP + diphosphate + H(+). In terms of biological role, catalyzes the attachment of tyrosine to tRNA(Tyr) in a two-step reaction: tyrosine is first activated by ATP to form Tyr-AMP and then transferred to the acceptor end of tRNA(Tyr). This chain is Tyrosine--tRNA ligase, found in Pseudomonas savastanoi pv. phaseolicola (strain 1448A / Race 6) (Pseudomonas syringae pv. phaseolicola (strain 1448A / Race 6)).